A 340-amino-acid chain; its full sequence is Mitochondrial amidoxime-reducing component 1 (340 aa).

A lipid anchor (N-myristoyl glycine) is attached at Gly-2. Topologically, residues 2–24 (GAGSWALTLFGFSAFRVPGQPRS) are mitochondrial matrix. A helical; Signal-anchor for type II membrane protein membrane pass occupies residues 25–44 (TWLGVAALGLAAVALGTVAW). At 45-340 (RRARPRRRRR…VGDPVYLLGQ (296 aa)) the chain is on the cytoplasmic side. Residues Lys-70, Ser-71, and Arg-95 each coordinate Mo-molybdopterin. An MOSC N-terminal region region spans residues 96–186 (FWLVINEEGN…KMQSCRLVHF (91 aa)). In terms of domain architecture, MOSC spans 191–338 (RPRSSRQMKA…IRVGDPVYLL (148 aa)). Residues Ser-214, Arg-241, Asn-243, Thr-274, Arg-275, Cys-276, and Tyr-320 each contribute to the Mo-molybdopterin site.

Component of a complex composed of cytochrome b5, NADH-cytochrome b5 reductase and MTARC1. Requires Mo-molybdopterin as cofactor.

It localises to the mitochondrion outer membrane. It is found in the membrane. The catalysed reaction is N(omega)-hydroxy-L-arginine + 2 Fe(II)-[cytochrome b5] + 2 H(+) = L-arginine + 2 Fe(III)-[cytochrome b5] + H2O. Catalyzes the reduction of N-oxygenated molecules, acting as a counterpart of cytochrome P450 and flavin-containing monooxygenases in metabolic cycles. As a component of prodrug-converting system, reduces a multitude of N-hydroxylated prodrugs particularly amidoximes, leading to increased drug bioavailability. May be involved in mitochondrial N(omega)-hydroxy-L-arginine (NOHA) reduction, regulating endogenous nitric oxide levels and biosynthesis. Postulated to cleave the N-OH bond of N-hydroxylated substrates in concert with electron transfer from NADH to cytochrome b5 reductase then to cytochrome b5, the ultimate electron donor that primes the active site for substrate reduction. The polypeptide is Mitochondrial amidoxime-reducing component 1 (Mtarc1) (Mus musculus (Mouse)).